The following is a 343-amino-acid chain: Lipopolysaccharide core biosynthesis glycosyltransferase LpsD (343 aa).

The protein belongs to the glycosyltransferase group 1 family. Glycosyltransferase 4 subfamily.

It functions in the pathway bacterial outer membrane biogenesis; LPS core biosynthesis. The sequence is that of Lipopolysaccharide core biosynthesis glycosyltransferase LpsD (lpsD) from Rhizobium meliloti (strain 1021) (Ensifer meliloti).